A 303-amino-acid polypeptide reads, in one-letter code: DnaJ homolog subfamily C member 17 (303 aa).

The 66-residue stretch at 11-76 folds into the J domain; it reads DLYALLGIEE…AARAAYDKVR (66 aa). Basic and acidic residues-rich tracts occupy residues 78-106 and 150-166; these read ARKQAAERTQRLDEKRKKVKLDLEARERQ and IRQDREQRLRGRTENTE. 2 disordered regions span residues 78 to 124 and 150 to 170; these read ARKQ…TTTL and IRQDREQRLRGRTENTEGKGT. The RRM domain occupies 178–249; the sequence is KCKKEDESQG…NPLKVSWLEG (72 aa). Lysine 264 carries the N6-methyllysine modification.

The protein localises to the cytoplasm. Its subcellular location is the nucleus. In terms of biological role, may negatively affect PAX8-induced thyroglobulin/TG transcription. The polypeptide is DnaJ homolog subfamily C member 17 (Dnajc17) (Rattus norvegicus (Rat)).